The following is a 142-amino-acid chain: Large ribosomal subunit protein uL13 (142 aa).

This sequence belongs to the universal ribosomal protein uL13 family. In terms of assembly, part of the 50S ribosomal subunit.

This protein is one of the early assembly proteins of the 50S ribosomal subunit, although it is not seen to bind rRNA by itself. It is important during the early stages of 50S assembly. The sequence is that of Large ribosomal subunit protein uL13 from Acidithiobacillus ferrooxidans (strain ATCC 23270 / DSM 14882 / CIP 104768 / NCIMB 8455) (Ferrobacillus ferrooxidans (strain ATCC 23270)).